The sequence spans 180 residues: Crossover junction endodeoxyribonuclease RuvC (180 aa).

Active-site residues include D7, E66, and D138. Residues D7, E66, and D138 each coordinate Mg(2+).

This sequence belongs to the RuvC family. As to quaternary structure, homodimer which binds Holliday junction (HJ) DNA. The HJ becomes 2-fold symmetrical on binding to RuvC with unstacked arms; it has a different conformation from HJ DNA in complex with RuvA. In the full resolvosome a probable DNA-RuvA(4)-RuvB(12)-RuvC(2) complex forms which resolves the HJ. Requires Mg(2+) as cofactor.

It localises to the cytoplasm. The enzyme catalyses Endonucleolytic cleavage at a junction such as a reciprocal single-stranded crossover between two homologous DNA duplexes (Holliday junction).. The RuvA-RuvB-RuvC complex processes Holliday junction (HJ) DNA during genetic recombination and DNA repair. Endonuclease that resolves HJ intermediates. Cleaves cruciform DNA by making single-stranded nicks across the HJ at symmetrical positions within the homologous arms, yielding a 5'-phosphate and a 3'-hydroxyl group; requires a central core of homology in the junction. The consensus cleavage sequence is 5'-(A/T)TT(C/G)-3'. Cleavage occurs on the 3'-side of the TT dinucleotide at the point of strand exchange. HJ branch migration catalyzed by RuvA-RuvB allows RuvC to scan DNA until it finds its consensus sequence, where it cleaves and resolves the cruciform DNA. This chain is Crossover junction endodeoxyribonuclease RuvC, found in Paraburkholderia phymatum (strain DSM 17167 / CIP 108236 / LMG 21445 / STM815) (Burkholderia phymatum).